A 396-amino-acid chain; its full sequence is MSKLKLNPYFGEYGGMYVPQILVPALKQLETAFVEAQEDDDFKAEFTDLLKNYAGRPTALTLTRNLSPNPMVKIYLKREDLLHGGAHKTNQVLGQALLAKRMGKKEIIAETGAGQHGVATALACALLGLKCKVYMGAKDVARQSPNVFRMRLMGAEVIPVTSGSATLKDACNEAMRDWSGSYEKAHYLLGTAAGPHPFPTIVREFQRIIGEETKKQMLEREGRLPDAVIACVGGGSNAIGMFADFIDEPSVELIGVEPAGKGIDTPMHGAPLKHGKTGIFFGMKAPLMQDSEGQIEESYSISAGLDFPSVGPQHAHLNATGRARYESATDDEALEAFQQLARCEGIIPALESAHAIAYAVKMARECTKETILVVNLSGRGDKDIFTVSDILNGKEV.

An N6-(pyridoxal phosphate)lysine modification is found at lysine 88.

This sequence belongs to the TrpB family. As to quaternary structure, tetramer of two alpha and two beta chains. Pyridoxal 5'-phosphate is required as a cofactor.

It catalyses the reaction (1S,2R)-1-C-(indol-3-yl)glycerol 3-phosphate + L-serine = D-glyceraldehyde 3-phosphate + L-tryptophan + H2O. Its pathway is amino-acid biosynthesis; L-tryptophan biosynthesis; L-tryptophan from chorismate: step 5/5. The beta subunit is responsible for the synthesis of L-tryptophan from indole and L-serine. This Shewanella baltica (strain OS185) protein is Tryptophan synthase beta chain.